Reading from the N-terminus, the 317-residue chain is Zinc metalloproteinase/disintegrin (317 aa).

Residues 1-26 (EAPKMCGVTQNWESYEPIKKASQSNL) constitute a propeptide that is removed on maturation. Positions 32–228 (RYIELVIVAD…QKPQCILNKP (197 aa)) constitute a Peptidase M12B domain. Ca(2+) contacts are provided by Glu-35 and Asp-119. Cystine bridges form between Cys-143-Cys-223, Cys-183-Cys-207, and Cys-185-Cys-190. Position 168 (His-168) interacts with Zn(2+). Residue Glu-169 is part of the active site. His-172 and His-178 together coordinate Zn(2+). Residues Cys-223 and Asn-226 each contribute to the Ca(2+) site. Positions 229–244 (LRTDTVSTPVSGNELL) are excised as a propeptide. A Disintegrin domain is found at 236–317 (TPVSGNELLE…AGCPRNPFHA (82 aa)). Intrachain disulfides connect Cys-250-Cys-259, Cys-252-Cys-260, Cys-265-Cys-279, Cys-273-Cys-303, Cys-278-Cys-282, and Cys-291-Cys-310. Positions 295-297 (RGD) match the Cell attachment site motif.

This sequence belongs to the venom metalloproteinase (M12B) family. P-II subfamily. P-IIa sub-subfamily. In terms of assembly, monomer. The cofactor is Zn(2+). Expressed by the venom gland.

The protein localises to the secreted. Functionally, metalloproteinase that impairs hemostasis in the envenomed animal. Inhibits GPIIb/GPIIIa (ITGA2B/ITGB3) binding to immobilized fibrinogen with an IC(50) of 2.2 nM and ADP-induced platelet aggregation with an IC(50) of 131 nM, respectively. Inhibits angiogenesis. By binding to vitronectin receptor (alpha-V/beta-3 (ITGAV/ITGB3)), also induces apoptosis of endothelial cells by blocking their attachment to extracellular matrix proteins. Its function is as follows. Inhibits platelet aggregation induced by ADP (IC(50) is 30 nM), collagen (IC(50) is 500 nM), thrombin and epinephrin (IC(50) is 160 nM). In Gloydius brevicauda (Korean slamosa snake), this protein is Zinc metalloproteinase/disintegrin.